Reading from the N-terminus, the 227-residue chain is uncharacterized protein (227 aa).

Residues 52–100 (NKRAKLYRERNKAKLKEKQHKWYHKGGGKEHKKLYDKINLEKSNMRDKN) are a coiled coil.

Belongs to the mimivirus L246/L426 family.

This is an uncharacterized protein from Acanthamoeba polyphaga mimivirus (APMV).